We begin with the raw amino-acid sequence, 541 residues long: MQLTVWTYEGPPHVGAMRIATGMEGLHYVLHAPQGDTYADLLFTMIERRNKRPPVTYTTFAARDLGRDTAELFMTAARDAYARFQPQAMIVGASCTGSLIQDDPGGLAKSLGFPIPVIAIDLPAYQRKENWGAAETFYQLVRALAGPNAPAPGTKRPERAAGVRPSCNLLGPTALGFRHRDDITEITGLLGKLGIDVNVVAPMGSTPADIARLGDADFNVVMYPEIAGQAASWLHRIFHQPFTKTVPIGVSATRDFIQEVTALAGIDPAPMLQASSSRLPWYSHSVDSTYLTNKRVFIFGDATHAIAAARIASEELGFKVVGLGSYSREFGRELREAAKRYDVEPLITDDYLEVEAKVAELHPELVLGTQMERHIAKRLGVPCAVISAPVHVQDFPARYAPQMGFEGANVIFDTWVHPLMMGLEEHLLTMFKDDFEFKDGAMPSHLGTGHAAPVAEAVAAPAAAVATESVATGVAAPDIASATAVAAAAAVWAPEAEKELQKIPFFVRGKARRNTERFANENGVATITVETLYDAKAHFAR.

D36 lines the [4Fe-4S] cluster pocket. D287 functions as the Proton donor in the catalytic mechanism. Position 422 to 423 (422 to 423 (GL)) interacts with substrate.

The protein belongs to the ChlB/BchB/BchZ family. As to quaternary structure, protochlorophyllide reductase is composed of three subunits; BchL, BchN and BchB. Forms a heterotetramer of two BchB and two BchN subunits. [4Fe-4S] cluster serves as cofactor.

It catalyses the reaction chlorophyllide a + oxidized 2[4Fe-4S]-[ferredoxin] + 2 ADP + 2 phosphate = protochlorophyllide a + reduced 2[4Fe-4S]-[ferredoxin] + 2 ATP + 2 H2O. It participates in porphyrin-containing compound metabolism; bacteriochlorophyll biosynthesis (light-independent). In terms of biological role, component of the dark-operative protochlorophyllide reductase (DPOR) that uses Mg-ATP and reduced ferredoxin to reduce ring D of protochlorophyllide (Pchlide) to form chlorophyllide a (Chlide). This reaction is light-independent. The NB-protein (BchN-BchB) is the catalytic component of the complex. This Rhodopseudomonas palustris (strain HaA2) protein is Light-independent protochlorophyllide reductase subunit B.